Consider the following 620-residue polypeptide: 1-deoxy-D-xylulose-5-phosphate synthase (620 aa).

Residues histidine 80 and 121-123 contribute to the thiamine diphosphate site; that span reads GHS. Aspartate 152 provides a ligand contact to Mg(2+). Thiamine diphosphate is bound by residues 153-154, asparagine 181, tyrosine 288, and glutamate 370; that span reads GA. Asparagine 181 is a binding site for Mg(2+).

It belongs to the transketolase family. DXPS subfamily. As to quaternary structure, homodimer. The cofactor is Mg(2+). Thiamine diphosphate serves as cofactor.

It catalyses the reaction D-glyceraldehyde 3-phosphate + pyruvate + H(+) = 1-deoxy-D-xylulose 5-phosphate + CO2. It participates in metabolic intermediate biosynthesis; 1-deoxy-D-xylulose 5-phosphate biosynthesis; 1-deoxy-D-xylulose 5-phosphate from D-glyceraldehyde 3-phosphate and pyruvate: step 1/1. In terms of biological role, catalyzes the acyloin condensation reaction between C atoms 2 and 3 of pyruvate and glyceraldehyde 3-phosphate to yield 1-deoxy-D-xylulose-5-phosphate (DXP). This chain is 1-deoxy-D-xylulose-5-phosphate synthase, found in Cronobacter sakazakii (strain ATCC BAA-894) (Enterobacter sakazakii).